We begin with the raw amino-acid sequence, 1161 residues long: Lysine-specific demethylase 2A (1161 aa).

At Ser-28 the chain carries Phosphoserine. The 169-residue stretch at 148 to 316 folds into the JmjC domain; that stretch reads FSHTRLENMV…MQLKIYSIED (169 aa). Residue Thr-209 coordinates substrate. Fe cation is bound by residues His-212 and Asp-214. Lys-229 serves as a coordination point for substrate. Residue His-284 coordinates Fe cation. Phosphoserine occurs at positions 390 and 394. A compositionally biased stretch (low complexity) spans 419–433; it reads KTLSGDSSSDSTRGS. The tract at residues 419–445 is disordered; it reads KTLSGDSSSDSTRGSHNGQVWDPQCSP. At Ser-444 the chain carries Phosphoserine. Lys-505 participates in a covalent cross-link: Glycyl lysine isopeptide (Lys-Gly) (interchain with G-Cter in SUMO2). A disordered region spans residues 532–557; it reads VPTIPITKPHTMKPAPRLTPVRPAAA. Position 550 is a phosphothreonine (Thr-550). Phosphoserine is present on Ser-558. Residues 564–610 form a CXXC-type zinc finger; sequence ARRRRVRCRKCKACVQGECGVCHYCRDMKKFGGPGRMKQSCVLRQCL. Cys-571, Cys-574, Cys-577, Cys-582, Cys-585, Cys-588, Cys-604, Cys-609, Cys-620, and Cys-623 together coordinate Zn(2+). A PHD-type zinc finger spans residues 617–678; it reads SVTCSLCGEV…CWECPKCYQE (62 aa). Thr-632 is subject to Phosphothreonine. Residues Cys-642, Cys-645, His-650, Cys-653, Cys-672, and Cys-675 each coordinate Zn(2+). Ser-692 is modified (phosphoserine). A disordered region spans residues 705–789; that stretch reads LRSCEEPLTP…PSGKKELSEV (85 aa). Thr-713 carries the post-translational modification Phosphothreonine. 2 positions are modified to phosphoserine: Ser-718 and Ser-731. Basic and acidic residues-rich tracts occupy residues 746 to 757 and 771 to 789; these read SDHHSASRDERF and TMVR…LSEV. Phosphoserine is present on residues Ser-825, Ser-868, and Ser-882. A disordered region spans residues 840–886; that stretch reads CPARNPQHGDEEGLGGEEEEEEEEEEDDSAEEGGAARLNGRGSWAQD. Over residues 851-870 the composition is skewed to acidic residues; it reads EGLGGEEEEEEEEEEDDSAE. Residues 888-935 form the F-box domain; that stretch reads DESWMQREVWMSVFRYLSRKELCECMRVCKTWYKWCCDKRLWTKIDLS. LRR repeat units follow at residues 960–981 and 983–1009; these read WTNI…LKDL and LAGC…DLRW. ADP-ribosylarginine is present on Arg-1019. LRR repeat units follow at residues 1047–1072, 1073–1102, 1103–1127, and 1128–1155; these read GLDI…DLSH, CSHL…NMAG, CNKL…DLRG, and CKQI…SDEK.

The protein belongs to the JHDM1 histone demethylase family. As to quaternary structure, part of a SCF (SKP1-cullin-F-box) protein ligase complex. Interacts with CBX5/HP1A; the interaction promotes CBX5 localization to chromatin. The SKP1-KDM2A complex interacts with UBB. Fe(2+) serves as cofactor. Post-translationally, mono-ADP-ribosylated at Arg-1019 in response to DNA damage, leading to displacement from chromatin, resulting in increased dimethylation of histone H3 at 'Lys-36'.

The protein resides in the nucleus. The protein localises to the nucleoplasm. Its subcellular location is the chromosome. The enzyme catalyses N(6),N(6)-dimethyl-L-lysyl(36)-[histone H3] + 2 2-oxoglutarate + 2 O2 = L-lysyl(36)-[histone H3] + 2 formaldehyde + 2 succinate + 2 CO2. Functionally, histone demethylase that specifically demethylates 'Lys-36' of histone H3, thereby playing a central role in histone code. Preferentially demethylates dimethylated H3 'Lys-36' residue while it has weak or no activity for mono- and tri-methylated H3 'Lys-36'. May also recognize and bind to some phosphorylated proteins and promote their ubiquitination and degradation. Required to maintain the heterochromatic state. Associates with centromeres and represses transcription of small non-coding RNAs that are encoded by the clusters of satellite repeats at the centromere. Required to sustain centromeric integrity and genomic stability, particularly during mitosis. Regulates circadian gene expression by repressing the transcriptional activator activity of CLOCK-BMAL1 heterodimer and RORA in a catalytically-independent manner. The sequence is that of Lysine-specific demethylase 2A (Kdm2a) from Mus musculus (Mouse).